A 122-amino-acid chain; its full sequence is Large ribosomal subunit protein uL14 (122 aa).

Belongs to the universal ribosomal protein uL14 family. As to quaternary structure, part of the 50S ribosomal subunit. Forms a cluster with proteins L3 and L19. In the 70S ribosome, L14 and L19 interact and together make contacts with the 16S rRNA in bridges B5 and B8.

Its function is as follows. Binds to 23S rRNA. Forms part of two intersubunit bridges in the 70S ribosome. This is Large ribosomal subunit protein uL14 from Desulfatibacillum aliphaticivorans.